Reading from the N-terminus, the 561-residue chain is Dihydroxy-acid dehydratase (561 aa).

Cys51 lines the [2Fe-2S] cluster pocket. Mg(2+) is bound at residue Asp83. Position 124 (Cys124) interacts with [2Fe-2S] cluster. The Mg(2+) site is built by Asp125 and Lys126. Lys126 is subject to N6-carboxylysine. Cys196 is a binding site for [2Fe-2S] cluster. Glu447 is a binding site for Mg(2+). Catalysis depends on Ser473, which acts as the Proton acceptor.

It belongs to the IlvD/Edd family. In terms of assembly, homodimer. The cofactor is [2Fe-2S] cluster. It depends on Mg(2+) as a cofactor.

It carries out the reaction (2R)-2,3-dihydroxy-3-methylbutanoate = 3-methyl-2-oxobutanoate + H2O. The catalysed reaction is (2R,3R)-2,3-dihydroxy-3-methylpentanoate = (S)-3-methyl-2-oxopentanoate + H2O. The protein operates within amino-acid biosynthesis; L-isoleucine biosynthesis; L-isoleucine from 2-oxobutanoate: step 3/4. Its pathway is amino-acid biosynthesis; L-valine biosynthesis; L-valine from pyruvate: step 3/4. In terms of biological role, functions in the biosynthesis of branched-chain amino acids. Catalyzes the dehydration of (2R,3R)-2,3-dihydroxy-3-methylpentanoate (2,3-dihydroxy-3-methylvalerate) into 2-oxo-3-methylpentanoate (2-oxo-3-methylvalerate) and of (2R)-2,3-dihydroxy-3-methylbutanoate (2,3-dihydroxyisovalerate) into 2-oxo-3-methylbutanoate (2-oxoisovalerate), the penultimate precursor to L-isoleucine and L-valine, respectively. The protein is Dihydroxy-acid dehydratase of Oceanobacillus iheyensis (strain DSM 14371 / CIP 107618 / JCM 11309 / KCTC 3954 / HTE831).